Reading from the N-terminus, the 412-residue chain is Phospholipase A1-IIdelta (412 aa).

Position 2 is an N-acetylalanine (A2). S238 (acyl-ester intermediate) is an active-site residue. Catalysis depends on charge relay system residues S238, D297, and H336.

It belongs to the AB hydrolase superfamily. Lipase family. In terms of tissue distribution, expressed in leaves, stems, flowers and siliques, and, at low levels, in seeds and roots (at protein level).

It is found in the cytoplasm. In terms of biological role, acylhydrolase that catalyzes the hydrolysis of phosphatidylcholine (PC) at the sn-1 position. High activity toward PC, medium activity toward monogalactosyldiacylglycerol (MGDG) and low activity toward triacylglycerol (TAG). Confers sensitivity to UV-B radiation probably by deesterifying membrane phospholipids. This Arabidopsis thaliana (Mouse-ear cress) protein is Phospholipase A1-IIdelta.